The sequence spans 474 residues: Coiled-coil domain-containing protein 6 (474 aa).

The segment covering 1 to 10 (MADSASESDT) has biased composition (acidic residues). Positions 1-47 (MADSASESDTDGAGGNSSSSAAMQSSCSSTSGGGGGGGGGGGGGKSG) are disordered. A2 carries the N-acetylalanine modification. The segment covering 16–30 (NSSSSAAMQSSCSST) has biased composition (low complexity). Positions 31-47 (SGGGGGGGGGGGGGKSG) are enriched in gly residues. Phosphoserine is present on S52. Positions 53–237 (PFRLEELTNR…KRILQEKLDQ (185 aa)) form a coiled coil. 3 tandem repeats follow at residues 106-134 (EQEE…AVNY), 135-163 (EKEE…EQHL), and 164-192 (EQEQ…QLTL). The interval 106 to 235 (EQEEEFISNT…AEKRILQEKL (130 aa)) is 5 X 29 AA tandem repeats. The 4; approximate repeat unit spans residues 193-206 (EQLRREKIDLENTL). The stretch at 207–235 (EQEQEALVNRLWKRMDKLEAEKRILQEKL) is repeat 5. Phosphoserine is present on residues S240, S244, S249, S254, S284, and S323. Residues 253–332 (DSPENMMRHI…SESESSLEMD (80 aa)) adopt a coiled-coil conformation. The disordered stretch occupies residues 342–369 (AQGLRPRTVSSPIPYTPSPSSSRPISPG). T349 carries the post-translational modification Phosphothreonine. The span at 351–368 (SSPIPYTPSPSSSRPISP) shows a compositional bias: low complexity. A phosphoserine mark is found at S363 and S367. The residue at position 387 (R387) is an Omega-N-methylarginine. S395 and S413 each carry phosphoserine. Residues 397 to 474 (GLHVQHMGTS…QHSAHPSSQP (78 aa)) form a disordered region. Pro residues predominate over residues 426–451 (PTPPPSPNTQTPVQPPPPPPPPPMQP). The SH3-binding motif lies at 442-451 (PPPPPPPMQP). Residues 459–474 (SQPTPSQHSAHPSSQP) are compositionally biased toward low complexity.

As to expression, ubiquitously expressed.

It localises to the cytoplasm. The protein resides in the cytoskeleton. This is Coiled-coil domain-containing protein 6 (CCDC6) from Homo sapiens (Human).